We begin with the raw amino-acid sequence, 418 residues long: Zinc finger protein 566 (418 aa).

The region spanning 6–77 (VMFSDVSVDF…DRELTRGQWP (72 aa)) is the KRAB domain. The C2H2-type 1; degenerate zinc finger occupies 169-193 (KFCASKEYRKTFRHGSQFATHEIIH). 7 C2H2-type zinc fingers span residues 199–221 (YECK…QKIH), 227–249 (FECK…HRIH), 255–277 (YECK…QRIH), 283–305 (YECK…QRIH), 311–333 (YECK…QRIH), 339–361 (YECK…QRIH), and 367–389 (YECK…HRIH). Residues lysine 314 and lysine 328 each participate in a glycyl lysine isopeptide (Lys-Gly) (interchain with G-Cter in SUMO2) cross-link.

Belongs to the krueppel C2H2-type zinc-finger protein family.

It is found in the nucleus. Functionally, may be involved in transcriptional regulation. In Pan troglodytes (Chimpanzee), this protein is Zinc finger protein 566 (ZNF566).